Reading from the N-terminus, the 88-residue chain is Small ribosomal subunit protein bS16c (88 aa).

Belongs to the bacterial ribosomal protein bS16 family.

Its subcellular location is the plastid. It is found in the chloroplast. The sequence is that of Small ribosomal subunit protein bS16c from Lactuca sativa (Garden lettuce).